The sequence spans 182 residues: uncharacterized protein (182 aa).

The signal sequence occupies residues Met-1–Ala-29. Residues Trp-152–Val-174 traverse the membrane as a helical segment.

The protein resides in the membrane. This is an uncharacterized protein from Bacillus subtilis (strain 168).